Reading from the N-terminus, the 282-residue chain is Aldo-keto reductase MT3049 (282 aa).

Y57 acts as the Proton donor in catalysis. Residues L197, V235, R237, S238, A239, R243, S246, N247, and R273 each coordinate NADPH.

This sequence belongs to the aldo/keto reductase family.

The chain is Aldo-keto reductase MT3049 from Mycobacterium tuberculosis (strain CDC 1551 / Oshkosh).